The primary structure comprises 161 residues: Allophycocyanin alpha-B chain (161 aa).

An N4-methylasparagine modification is found at Asn71. (2R,3E)-phycocyanobilin is bound at residue Cys81.

This sequence belongs to the phycobiliprotein family. In terms of processing, contains one covalently linked bilin chromophore.

It localises to the plastid. The protein localises to the chloroplast thylakoid membrane. Allophycocyanin is a photosynthetic bile pigment-protein complex with maximum absorption at approximately 650 nanometers. The polypeptide is Allophycocyanin alpha-B chain (apcD) (Porphyra purpurea (Red seaweed)).